The sequence spans 547 residues: Alpha-humulene/(-)-(E)-beta-caryophyllene synthase (547 aa).

Residues arginine 262, aspartate 299, aspartate 303, arginine 442, and aspartate 445 each coordinate (2E,6E)-farnesyl diphosphate. Residues aspartate 299 and aspartate 303 each coordinate Mg(2+). Positions 299 to 303 match the DDXXD motif motif; that stretch reads DDMYD. Residues aspartate 445, aspartate 446, serine 449, and glutamate 453 each coordinate Mg(2+).

It belongs to the terpene synthase family. Tpsa subfamily. In terms of assembly, monomer. The cofactor is Mg(2+). Mn(2+) is required as a cofactor. In terms of tissue distribution, expressed exclusively in flowers. Expressed in the flower stigmata and also detected in the mesocarp cell layers of the silique wall.

Its subcellular location is the cytoplasm. The enzyme catalyses (2E,6E)-farnesyl diphosphate = (-)-(E)-beta-caryophyllene + diphosphate. The catalysed reaction is (2E,6E)-farnesyl diphosphate = alpha-copaene + diphosphate. It carries out the reaction (2E,6E)-farnesyl diphosphate = alpha-humulene + diphosphate. It catalyses the reaction (2E,6E)-farnesyl diphosphate = (1S,2S,4R)-beta-elemene + diphosphate. Its pathway is secondary metabolite biosynthesis; terpenoid biosynthesis. Its function is as follows. Involved in sesquiterpene (C15) biosynthesis. The major products are beta-caryophyllene and alpha-humulene. Does not convert geranyl diphosphate (GPP) to any monoterpenes. This chain is Alpha-humulene/(-)-(E)-beta-caryophyllene synthase, found in Arabidopsis thaliana (Mouse-ear cress).